A 785-amino-acid chain; its full sequence is Endonuclease MutS2 (785 aa).

Residue 335–342 (GPNTGGKT) coordinates ATP. The Smr domain maps to 710-785 (LDLRGERYEE…GLGNTVVELR (76 aa)). Residues 764-785 (VKSARDGGANEGGLGNTVVELR) form a disordered region.

The protein belongs to the DNA mismatch repair MutS family. MutS2 subfamily. As to quaternary structure, homodimer. Binds to stalled ribosomes, contacting rRNA.

Its function is as follows. Endonuclease that is involved in the suppression of homologous recombination and thus may have a key role in the control of bacterial genetic diversity. In terms of biological role, acts as a ribosome collision sensor, splitting the ribosome into its 2 subunits. Detects stalled/collided 70S ribosomes which it binds and splits by an ATP-hydrolysis driven conformational change. Acts upstream of the ribosome quality control system (RQC), a ribosome-associated complex that mediates the extraction of incompletely synthesized nascent chains from stalled ribosomes and their subsequent degradation. Probably generates substrates for RQC. In Halalkalibacterium halodurans (strain ATCC BAA-125 / DSM 18197 / FERM 7344 / JCM 9153 / C-125) (Bacillus halodurans), this protein is Endonuclease MutS2.